The chain runs to 181 residues: Lysozyme C (181 aa).

A signal peptide spans Met-1–Gly-19. Positions Leu-139–Glu-181 are excised as a propeptide.

Belongs to the dictyostelium lysozyme family. Contains six disulfide bonds.

It is found in the cytoplasmic vesicle lumen. It catalyses the reaction Hydrolysis of (1-&gt;4)-beta-linkages between N-acetylmuramic acid and N-acetyl-D-glucosamine residues in a peptidoglycan and between N-acetyl-D-glucosamine residues in chitodextrins.. Has antibacterial activity. The protein is Lysozyme C (alyC) of Dictyostelium discoideum (Social amoeba).